The sequence spans 403 residues: Imidazolonepropionase (403 aa).

Fe(3+)-binding residues include His68 and His70. The Zn(2+) site is built by His68 and His70. 4-imidazolone-5-propanoate contacts are provided by Arg77, Tyr140, and His173. Tyr140 lines the N-formimidoyl-L-glutamate pocket. His238 contacts Fe(3+). His238 contributes to the Zn(2+) binding site. 4-imidazolone-5-propanoate is bound at residue Gln241. Position 313 (Asp313) interacts with Fe(3+). Asp313 is a Zn(2+) binding site. The N-formimidoyl-L-glutamate site is built by Asn315 and Gly317. Thr318 contributes to the 4-imidazolone-5-propanoate binding site.

The protein belongs to the metallo-dependent hydrolases superfamily. HutI family. It depends on Zn(2+) as a cofactor. Requires Fe(3+) as cofactor.

The protein localises to the cytoplasm. It carries out the reaction 4-imidazolone-5-propanoate + H2O = N-formimidoyl-L-glutamate. It participates in amino-acid degradation; L-histidine degradation into L-glutamate; N-formimidoyl-L-glutamate from L-histidine: step 3/3. Its function is as follows. Catalyzes the hydrolytic cleavage of the carbon-nitrogen bond in imidazolone-5-propanoate to yield N-formimidoyl-L-glutamate. It is the third step in the universal histidine degradation pathway. In Psychromonas ingrahamii (strain DSM 17664 / CCUG 51855 / 37), this protein is Imidazolonepropionase.